We begin with the raw amino-acid sequence, 155 residues long: RNA pyrophosphohydrolase (155 aa).

Positions 5 to 147 (KYRPNVAAII…KRQVYRQVIA (143 aa)) constitute a Nudix hydrolase domain. The Nudix box motif lies at 42–63 (GGIDEGETPLEALHRELLEEIG).

This sequence belongs to the Nudix hydrolase family. RppH subfamily. A divalent metal cation serves as cofactor.

Accelerates the degradation of transcripts by removing pyrophosphate from the 5'-end of triphosphorylated RNA, leading to a more labile monophosphorylated state that can stimulate subsequent ribonuclease cleavage. The protein is RNA pyrophosphohydrolase of Helicobacter pylori (strain HPAG1).